We begin with the raw amino-acid sequence, 408 residues long: MKNQSEINIGLVGHVDHGKTTLTKALSGVWTDTHSEETKRGISIRLGYADITFRKCPQCEAPMCYTTAEICERCGTETELLRKVSFVDAPGHETLMATMLSGAALMDGAILVIAANEPCPQPQTKEHLMALDVIGVKDVIVVQNKIDIVSKERALESYREIKEFVKGTCAEDAPIIPVSAQQGANIDILIETIEERIKTPKRDVDKPARMYVARSFDINKPGADPEHLAGGVIGGSLVQGRLRVGDEIEIRPGIQVKKDGKQTWMSLHSTITGLVAGGEEMEEVGPGGLVGVGTLLDPALTKADSLSGSVAGEPGTLPPVRHSFTMETHLLERVVGTKEETKVEPIKTGEPLMINVGTTTTVGVVKSARADDADVVLKLPACAEEGQRIALSRRVGARWRLIGYGIIK.

The tr-type G domain occupies Q4 to K201. The tract at residues G13–T20 is G1. Mg(2+)-binding residues include D16, T20, G41, and S43. A GTP-binding site is contributed by D16–T21. Residues G41–R45 form a G2 region. Residues C56, C59, C71, and C74 each contribute to the Zn(2+) site. The G3 stretch occupies residues D88–G91. Residues N144–D147 and S179–Q181 contribute to the GTP site. Residues N144–D147 form a G4 region. The interval S179 to Q181 is G5.

It belongs to the TRAFAC class translation factor GTPase superfamily. Classic translation factor GTPase family. EIF2G subfamily. In terms of assembly, heterotrimer composed of an alpha, a beta and a gamma chain. Requires Mg(2+) as cofactor.

The enzyme catalyses GTP + H2O = GDP + phosphate + H(+). Its function is as follows. eIF-2 functions in the early steps of protein synthesis by forming a ternary complex with GTP and initiator tRNA. The chain is Translation initiation factor 2 subunit gamma from Methanothermobacter thermautotrophicus (strain ATCC 29096 / DSM 1053 / JCM 10044 / NBRC 100330 / Delta H) (Methanobacterium thermoautotrophicum).